A 331-amino-acid chain; its full sequence is DNA-directed RNA polymerase subunit alpha (331 aa).

The tract at residues 1 to 246 is alpha N-terminal domain (alpha-NTD); sequence MMQTSRTLHN…GLFSPLQEVS (246 aa). Residues 256-331 are alpha C-terminal domain (alpha-CTD); sequence AEDNQKNQIP…LTLPRERSKT (76 aa).

The protein belongs to the RNA polymerase alpha chain family. As to quaternary structure, in cyanobacteria the RNAP catalytic core is composed of 2 alpha, 1 beta, 1 beta', 1 gamma and 1 omega subunit. When a sigma factor is associated with the core the holoenzyme is formed, which can initiate transcription.

It catalyses the reaction RNA(n) + a ribonucleoside 5'-triphosphate = RNA(n+1) + diphosphate. In terms of biological role, DNA-dependent RNA polymerase catalyzes the transcription of DNA into RNA using the four ribonucleoside triphosphates as substrates. In Synechococcus sp. (strain JA-3-3Ab) (Cyanobacteria bacterium Yellowstone A-Prime), this protein is DNA-directed RNA polymerase subunit alpha.